The primary structure comprises 244 residues: LOB domain-containing protein 17 (244 aa).

Positions 6 to 108 (SPCGACKFLR…TQLEILKQQA (103 aa)) constitute an LOB domain.

The protein belongs to the LOB domain-containing protein family. Expressed in roots, stems, leaves and flowers.

In Arabidopsis thaliana (Mouse-ear cress), this protein is LOB domain-containing protein 17 (LBD17).